The chain runs to 367 residues: GDSL esterase/lipase At4g28780 (367 aa).

The N-terminal stretch at 1–28 is a signal peptide; sequence MSTFLLTWIIMTVALSVTLFLMPQQTNA. Ser-38 (nucleophile) is an active-site residue. An N-linked (GlcNAc...) asparagine glycan is attached at Asn-119. Catalysis depends on residues Asp-328 and His-331. Asn-356 is a glycosylation site (N-linked (GlcNAc...) asparagine).

The protein belongs to the 'GDSL' lipolytic enzyme family.

Its subcellular location is the secreted. This Arabidopsis thaliana (Mouse-ear cress) protein is GDSL esterase/lipase At4g28780.